Reading from the N-terminus, the 323-residue chain is DNA-directed RNA polymerase subunit alpha (323 aa).

An alpha N-terminal domain (alpha-NTD) region spans residues 1 to 233; it reads MGQEKVTVST…DLFIPFFHAE (233 aa). Positions 264-323 are alpha C-terminal domain (alpha-CTD); sequence IALKYIYIDQSELPPRVYNCLKRSNINTFLELLNNSQEELMKIQDFRIEDVKHILDVLEI.

The protein belongs to the RNA polymerase alpha chain family. In plastids the minimal PEP RNA polymerase catalytic core is composed of four subunits: alpha, beta, beta', and beta''. When a (nuclear-encoded) sigma factor is associated with the core the holoenzyme is formed, which can initiate transcription.

The protein localises to the plastid. The protein resides in the chloroplast. It carries out the reaction RNA(n) + a ribonucleoside 5'-triphosphate = RNA(n+1) + diphosphate. DNA-dependent RNA polymerase catalyzes the transcription of DNA into RNA using the four ribonucleoside triphosphates as substrates. The protein is DNA-directed RNA polymerase subunit alpha of Morus indica (Mulberry).